The following is a 154-amino-acid chain: Deoxyuridine 5'-triphosphate nucleotidohydrolase (154 aa).

Substrate contacts are provided by residues 74 to 76, asparagine 87, 91 to 93, and lysine 101; these read RSG and TID.

The protein belongs to the dUTPase family. Requires Mg(2+) as cofactor.

The catalysed reaction is dUTP + H2O = dUMP + diphosphate + H(+). It participates in pyrimidine metabolism; dUMP biosynthesis; dUMP from dCTP (dUTP route): step 2/2. Functionally, this enzyme is involved in nucleotide metabolism: it produces dUMP, the immediate precursor of thymidine nucleotides and it decreases the intracellular concentration of dUTP so that uracil cannot be incorporated into DNA. This chain is Deoxyuridine 5'-triphosphate nucleotidohydrolase, found in Cytophaga hutchinsonii (strain ATCC 33406 / DSM 1761 / CIP 103989 / NBRC 15051 / NCIMB 9469 / D465).